Consider the following 198-residue polypeptide: Ribonuclease HII (198 aa).

An RNase H type-2 domain is found at 11-198; it reads ELIAGVDEVG…SPVRKLLENE (188 aa). A divalent metal cation contacts are provided by D17, E18, and D109.

It belongs to the RNase HII family. Mn(2+) serves as cofactor. Mg(2+) is required as a cofactor.

The protein localises to the cytoplasm. The enzyme catalyses Endonucleolytic cleavage to 5'-phosphomonoester.. In terms of biological role, endonuclease that specifically degrades the RNA of RNA-DNA hybrids. The protein is Ribonuclease HII of Mannheimia succiniciproducens (strain KCTC 0769BP / MBEL55E).